The sequence spans 328 residues: Malate dehydrogenase (328 aa).

12-18 (GAAGQIG) serves as a coordination point for NAD(+). 2 residues coordinate substrate: arginine 93 and arginine 99. NAD(+) is bound by residues asparagine 106, glutamine 113, and 130 to 132 (TGN). Substrate contacts are provided by asparagine 132 and arginine 163. The active-site Proton acceptor is histidine 188.

This sequence belongs to the LDH/MDH superfamily. MDH type 2 family.

The enzyme catalyses (S)-malate + NAD(+) = oxaloacetate + NADH + H(+). Its function is as follows. Catalyzes the reversible oxidation of malate to oxaloacetate. The chain is Malate dehydrogenase from Kocuria rhizophila (strain ATCC 9341 / DSM 348 / NBRC 103217 / DC2201).